The following is a 423-amino-acid chain: GTPase HflX (423 aa).

Positions 201–363 (IQLALVGYTN…KIEQALKGMM (163 aa)) constitute a Hflx-type G domain. GTP contacts are provided by residues 207–214 (GYTNAGKS), 232–236 (FATLD), 254–257 (DTVG), 320–323 (NKAD), and 341–343 (SAY). Residues Ser214 and Thr234 each coordinate Mg(2+).

Belongs to the TRAFAC class OBG-HflX-like GTPase superfamily. HflX GTPase family. As to quaternary structure, monomer. Associates with the 50S ribosomal subunit. Requires Mg(2+) as cofactor.

Its subcellular location is the cytoplasm. GTPase that associates with the 50S ribosomal subunit and may have a role during protein synthesis or ribosome biogenesis. The sequence is that of GTPase HflX from Alkalihalophilus pseudofirmus (strain ATCC BAA-2126 / JCM 17055 / OF4) (Bacillus pseudofirmus).